The sequence spans 276 residues: TIMELESS-interacting protein (276 aa).

Positions 1 to 54 (MLEQEENGLFEIPDYEHVEDETFPPFPPPGSPERDPAEAEPDEGSGAPVPVPPK) are disordered. The interaction with TIMELESS stretch occupies residues 64 to 140 (LDATRLTSER…KEVQTCLKRI (77 aa)). Positions 217–243 (SNSQSLENDVTVEESSTGENQEESNGL) are enriched in polar residues. A disordered region spans residues 217–276 (SNSQSLENDVTVEESSTGENQEESNGLISADGPHDVPSASTQEEGQLEAEETQLDHPNLD). At Ser-219 the chain carries Phosphoserine. Thr-233 carries the phosphothreonine modification.

This sequence belongs to the CSM3 family. In terms of assembly, interacts with TIMELESS, which impairs TIMELESS self-association (via N-terminus). Associates with the MCM2-7 complex. Interacts with RPA2, PRDX2.

It localises to the cytoplasm. It is found in the nucleus. In terms of biological role, plays an important role in the control of DNA replication and the maintenance of replication fork stability. Important for cell survival after DNA damage or replication stress. May be specifically required for the ATR-CHEK1 pathway in the replication checkpoint induced by hydroxyurea or ultraviolet light. Forms a complex with TIMELESS and this complex regulates DNA replication processes under both normal and stress conditions, stabilizes replication forks and influences both CHEK1 phosphorylation and the intra-S phase checkpoint in response to genotoxic stress. In Rattus norvegicus (Rat), this protein is TIMELESS-interacting protein (Tipin).